The chain runs to 333 residues: 4-hydroxy-3-methylbut-2-enyl diphosphate reductase (333 aa).

Cys-34 contributes to the [4Fe-4S] cluster binding site. The (2E)-4-hydroxy-3-methylbut-2-enyl diphosphate site is built by His-63 and His-96. Positions 63 and 96 each coordinate dimethylallyl diphosphate. His-63 and His-96 together coordinate isopentenyl diphosphate. Cys-118 provides a ligand contact to [4Fe-4S] cluster. His-146 is a (2E)-4-hydroxy-3-methylbut-2-enyl diphosphate binding site. His-146 contacts dimethylallyl diphosphate. An isopentenyl diphosphate-binding site is contributed by His-146. Glu-148 serves as the catalytic Proton donor. Position 186 (Thr-186) interacts with (2E)-4-hydroxy-3-methylbut-2-enyl diphosphate. Position 216 (Cys-216) interacts with [4Fe-4S] cluster. (2E)-4-hydroxy-3-methylbut-2-enyl diphosphate is bound by residues Ser-244, Ser-245, Asn-246, and Ser-289. The dimethylallyl diphosphate site is built by Ser-244, Ser-245, Asn-246, and Ser-289. Isopentenyl diphosphate-binding residues include Ser-244, Ser-245, Asn-246, and Ser-289.

The protein belongs to the IspH family. The cofactor is [4Fe-4S] cluster.

The enzyme catalyses isopentenyl diphosphate + 2 oxidized [2Fe-2S]-[ferredoxin] + H2O = (2E)-4-hydroxy-3-methylbut-2-enyl diphosphate + 2 reduced [2Fe-2S]-[ferredoxin] + 2 H(+). It carries out the reaction dimethylallyl diphosphate + 2 oxidized [2Fe-2S]-[ferredoxin] + H2O = (2E)-4-hydroxy-3-methylbut-2-enyl diphosphate + 2 reduced [2Fe-2S]-[ferredoxin] + 2 H(+). The protein operates within isoprenoid biosynthesis; dimethylallyl diphosphate biosynthesis; dimethylallyl diphosphate from (2E)-4-hydroxy-3-methylbutenyl diphosphate: step 1/1. Its pathway is isoprenoid biosynthesis; isopentenyl diphosphate biosynthesis via DXP pathway; isopentenyl diphosphate from 1-deoxy-D-xylulose 5-phosphate: step 6/6. In terms of biological role, catalyzes the conversion of 1-hydroxy-2-methyl-2-(E)-butenyl 4-diphosphate (HMBPP) into a mixture of isopentenyl diphosphate (IPP) and dimethylallyl diphosphate (DMAPP). Acts in the terminal step of the DOXP/MEP pathway for isoprenoid precursor biosynthesis. The chain is 4-hydroxy-3-methylbut-2-enyl diphosphate reductase from Mycobacterium sp. (strain JLS).